The chain runs to 147 residues: Methylated-DNA--protein-cysteine methyltransferase (147 aa).

The Nucleophile; methyl group acceptor role is filled by Cys112.

The protein belongs to the MGMT family.

The protein localises to the cytoplasm. The catalysed reaction is a 6-O-methyl-2'-deoxyguanosine in DNA + L-cysteinyl-[protein] = S-methyl-L-cysteinyl-[protein] + a 2'-deoxyguanosine in DNA. The enzyme catalyses a 4-O-methyl-thymidine in DNA + L-cysteinyl-[protein] = a thymidine in DNA + S-methyl-L-cysteinyl-[protein]. Functionally, involved in the cellular defense against the biological effects of O6-methylguanine (O6-MeG) and O4-methylthymine (O4-MeT) in DNA. Repairs the methylated nucleobase in DNA by stoichiometrically transferring the methyl group to a cysteine residue in the enzyme. This is a suicide reaction: the enzyme is irreversibly inactivated. This chain is Methylated-DNA--protein-cysteine methyltransferase, found in Archaeoglobus fulgidus (strain ATCC 49558 / DSM 4304 / JCM 9628 / NBRC 100126 / VC-16).